The following is an 88-amino-acid chain: HssA/B-like protein 64 (88 aa).

The segment covering 1 to 24 has biased composition (low complexity); sequence MTLFSSISSMSSSMTSSKSSFASF. Disordered stretches follow at residues 1 to 25 and 45 to 88; these read MTLF…ASFG and GVSS…GNSC. The segment covering 56–66 has biased composition (gly residues); the sequence is AKSGGDCGGKG.

Belongs to the hssA/B family.

The polypeptide is HssA/B-like protein 64 (hssl64) (Dictyostelium discoideum (Social amoeba)).